The primary structure comprises 338 residues: Ferredoxin--NADP reductase (338 aa).

8 residues coordinate FAD: T14, D33, Q41, Y46, V86, F120, D284, and T325.

It belongs to the ferredoxin--NADP reductase type 2 family. Homodimer. FAD is required as a cofactor.

The enzyme catalyses 2 reduced [2Fe-2S]-[ferredoxin] + NADP(+) + H(+) = 2 oxidized [2Fe-2S]-[ferredoxin] + NADPH. This Pelagibacter ubique (strain HTCC1062) protein is Ferredoxin--NADP reductase.